Consider the following 163-residue polypeptide: Retinoic acid receptor responder protein 2 (163 aa).

The N-terminal stretch at 1 to 20 is a signal peptide; the sequence is MKYLLISLALWLGMVGIHGT. Cystine bridges form between cysteine 79–cysteine 89, cysteine 100–cysteine 119, and cysteine 103–cysteine 135. A propeptide spanning residues 158–163 is cleaved from the precursor; the sequence is RALKHK.

Post-translationally, secreted in an inactive precursor form, prochemerin, which is proteolytically processed by a variety of extracellular proteases to generate forms with differing levels of bioactivity. For example, the removal of six amino acids results in chemerin-157, which exhibits the highest activity, while removal of seven amino acids results in chemerin-156 which has slightly less activity. Some proteases are able to cleave at more than one site and chemerin forms may be sequentially processed by different enzymes to modulate activity levels. The coordinated expression and activity of chemerin-modifying enzymes is essential for regulating its bioactivation, inactivation and, consequently, biological function. Cathepsin G cleaves seven C-terminal amino acids from prochemerin (chemerin-156), elastase is able to cleave six (chemerin-157), eight (chemerin-155) or eleven (chemerin-152), plasmin cleaves five amino acids (chemerin-158), and tryptase cleaves five (chemerin-158) or eight (chemerin-155). Multiple cleavages might be required to fully activate chemerin, with an initial tryptase cleavage resulting in chemerin with low activity (chemerin-158), and a second cleavage by carboxypeptidase N or B producing highly active chemerin (chemerin-157).

It localises to the secreted. Functionally, adipocyte-secreted protein (adipokine) that regulates adipogenesis, metabolism and inflammation through activation of the chemokine-like receptor 1 (CMKLR1). Also acts as a ligand for CMKLR2. Can also bind to C-C chemokine receptor-like 2 (CCRL2), but with a lower affinity than it does to CMKLR1 or CMKLR2. Positively regulates adipocyte differentiation, modulates the expression of adipocyte genes involved in lipid and glucose metabolism and might play a role in angiogenesis, a process essential for the expansion of white adipose tissue. Also acts as a pro-inflammatory adipokine, causing an increase in secretion of pro-inflammatory and prodiabetic adipokines, which further impair adipose tissue metabolic function and have negative systemic effects including impaired insulin sensitivity, altered glucose and lipid metabolism, and a decrease in vascular function in other tissues. Can have both pro- and anti-inflammatory properties depending on the modality of enzymatic cleavage by different classes of proteases. Acts as a chemotactic factor for leukocyte populations expressing CMKLR1, particularly immature plasmacytoid dendritic cells, but also immature myeloid DCs, macrophages and natural killer cells. Exerts an anti-inflammatory role by preventing TNF/TNFA-induced VCAM1 expression and monocytes adhesion in vascular endothelial cells. The effect is mediated via inhibiting activation of NF-kappa-B and CRK/p38 through stimulation of AKT1/NOS3 signaling and nitric oxide production. Its dual role in inflammation and metabolism might provide a link Exhibits an antimicrobial function in the skin. In Cricetulus griseus (Chinese hamster), this protein is Retinoic acid receptor responder protein 2 (RARRES2).